The following is a 350-amino-acid chain: Transmembrane protein 185A (350 aa).

The next 7 membrane-spanning stretches (helical) occupy residues 16–36 (LIYACLLLFSVLLALRLDGII), 41–61 (WAVFAPIWLWKLMVIVGASVG), 81–101 (FKAMLIAVGIHLLLLMFEVLV), 111–131 (FWLLVFMPLFFVSPVSVAACV), 177–197 (ILMSFLCLVVLYYIVWSVLFL), 211–231 (ITMALSWMTIVVPLLTFEILL), and 240–260 (AFSCIPIFVPLWLSLITLMAT). The segment at 298–350 (DLHHEDNEETEETPVPEPPKIAPMFRKKARVVITQSPGKYALPPPKLNIEMPD) is mediates interaction with MAP1B.

The protein belongs to the TMEM185 family. In terms of assembly, interacts with MAP1B.

The protein localises to the cell projection. It is found in the dendrite. Its subcellular location is the membrane. The protein is Transmembrane protein 185A (TMEM185A) of Pongo abelii (Sumatran orangutan).